We begin with the raw amino-acid sequence, 613 residues long: NADH-quinone oxidoreductase subunit L (613 aa).

Residues methionine 1–leucine 6 lie on the Periplasmic side of the membrane. A helical transmembrane segment spans residues threonine 7–glycine 23. Residues arginine 24–alanine 31 are Cytoplasmic-facing. The helical transmembrane segment at isoleucine 32–phenylalanine 52 threads the bilayer. Residues phenylalanine 53–asparagine 74 lie on the Periplasmic side of the membrane. Residues isoleucine 75–isoleucine 99 traverse the membrane as a helical segment. Topologically, residues histidine 100–arginine 115 are cytoplasmic. The chain crosses the membrane as a helical span at residues phenylalanine 116 to alanine 133. Residues aspartate 134–aspartate 210 are Periplasmic-facing. A helical transmembrane segment spans residues glycine 211–glycine 228. The Cytoplasmic segment spans residues lysine 229–proline 248. Residues valine 249–alanine 267 traverse the membrane as a helical segment. Residues arginine 268–histidine 281 lie on the Periplasmic side of the membrane. A helical membrane pass occupies residues leucine 282 to valine 300. Topologically, residues glutamine 301 to arginine 306 are cytoplasmic. Residues valine 307–valine 325 form a helical membrane-spanning segment. Topologically, residues glutamine 326–histidine 338 are periplasmic. The chain crosses the membrane as a helical span at residues alanine 339–cysteine 356. Topologically, residues histidine 357–proline 373 are cytoplasmic. Residues leucine 374–phenylalanine 397 form a helical membrane-spanning segment. Over serine 398–asparagine 413 the chain is Periplasmic. The helical transmembrane segment at leucine 414–phenylalanine 437 threads the bilayer. Residues histidine 438–serine 454 lie on the Cytoplasmic side of the membrane. A helical transmembrane segment spans residues leucine 455–valine 472. Residues proline 473–glutamate 494 lie on the Periplasmic side of the membrane. The helical transmembrane segment at isoleucine 495–glycine 514 threads the bilayer. The Cytoplasmic segment spans residues lysine 515 to glycine 589. A helical membrane pass occupies residues tyrosine 590–alanine 607. Residues leucine 608–arginine 613 are Periplasmic-facing.

The protein belongs to the complex I subunit 5 family. In terms of assembly, composed of 13 different subunits. Subunits NuoA, H, J, K, L, M, N constitute the membrane sector of the complex.

It is found in the cell inner membrane. The catalysed reaction is a quinone + NADH + 5 H(+)(in) = a quinol + NAD(+) + 4 H(+)(out). Functionally, NDH-1 shuttles electrons from NADH, via FMN and iron-sulfur (Fe-S) centers, to quinones in the respiratory chain. The immediate electron acceptor for the enzyme in this species is believed to be ubiquinone. Couples the redox reaction to proton translocation (for every two electrons transferred, four hydrogen ions are translocated across the cytoplasmic membrane), and thus conserves the redox energy in a proton gradient. This is NADH-quinone oxidoreductase subunit L (nuoL) from Escherichia coli (strain K12).